A 598-amino-acid polypeptide reads, in one-letter code: Nuclear receptor subfamily 4 group A member 1 (598 aa).

Disordered regions lie at residues 1 to 43 (MPCI…PEAA) and 128 to 151 (GSDY…PPQL). Low complexity predominate over residues 134-145 (SPCSAPSPSTPS). The required for nuclear import stretch occupies residues 171-466 (RAWTEQLPKA…PAEGKLIFCS (296 aa)). The segment at residues 264 to 339 (EGRCAVCGDN…VGMVKEVVRT (76 aa)) is a DNA-binding region (nuclear receptor). 2 consecutive NR C4-type zinc fingers follow at residues 267 to 287 (CAVC…CEGC) and 303 to 327 (CLAN…FQKC). The interval 268 to 354 (AVCGDNASCQ…RRGRLPSKPK (87 aa)) is required for binding NBRE-containing DNA. Positions 299–361 (AKYICLANKD…KPKQPPETSP (63 aa)) are required for the interaction with RXRA. Residue serine 341 is modified to Phosphoserine; by PKA. The interval 341-361 (SLKGRRGRLPSKPKQPPETSP) is disordered. Phosphoserine; by PKA, RPS6KA1 and RPS6KA3 is present on serine 351. An NR LBD domain is found at 360–595 (SPAHLLTSLV…PIVDKIFMDT (236 aa)). The segment at 521 to 544 (PRRVEELQNRIASCLKEHVSAEAG) is binds lipopolysaccharide. The segment at 584 to 595 (PPPIVDKIFMDT) is AF-2.

Belongs to the nuclear hormone receptor family. NR4 subfamily. As to quaternary structure, binds the NGFI-B response element (NBRE) as a monomer. Binds the Nur response element (NurRE), consisting of two inverse NBRE-related octanucleotide repeats separated by 6 base-pairs, as a dimer. Interacts (via N-terminus) with NLRP3 (via LRR repeat domain); the interaction is direct, requires binding of NR4A1/Nur77 to NBRE-containing dsDNA and lipopolysaccharide, and leads to non-canonical NLRP3 inflammasome activation. Interacts with GADD45GIP1. Interacts with STK11. Interacts with IFI27. Heterodimer (via DNA-binding domain) with RXRA (via C-terminus); DNA-binding of the heterodimer is enhanced by 9-cis retinoic acid. Competes for the RXRA interaction with EP300 and thereby attenuates EP300 mediated acetylation of RXRA. Interacts with NCOA1. Interacts with NCOA2. Interacts with NCOA3. Requires Zn(2+) as cofactor. In terms of processing, phosphorylated at Ser-351 by RPS6KA1 and RPS6KA3 in response to mitogenic or stress stimuli. Acetylated by p300/CBP, acetylation increases stability. Deacetylated by HDAC1.

The protein localises to the nucleus. It localises to the cytoplasm. Its subcellular location is the cytosol. The protein resides in the mitochondrion. Its function is as follows. Orphan nuclear receptor. Binds the NGFI-B response element (NBRE) 5'-AAAGGTCA-3'. Binds 9-cis-retinoic acid outside of its ligand-binding (NR LBD) domain. Participates in energy homeostasis by sequestrating the kinase STK11 in the nucleus, thereby attenuating cytoplasmic AMPK activation. Regulates the inflammatory response in macrophages by regulating metabolic adaptations during inflammation, including repressing the transcription of genes involved in the citric acid cycle (TCA). Inhibits NF-kappa-B signaling by binding to low-affinity NF-kappa-B binding sites, such as at the IL2 promoter. May act concomitantly with NR4A2 in regulating the expression of delayed-early genes during liver regeneration. Plays a role in the vascular response to injury. Functionally, in the cytosol, upon its detection of both bacterial lipopolysaccharide (LPS) and NBRE-containing mitochondrial DNA released by GSDMD pores during pyroptosis, it promotes non-canonical NLRP3 inflammasome activation by stimulating association of NLRP3 and NEK7. The chain is Nuclear receptor subfamily 4 group A member 1 (NR4A1) from Bos taurus (Bovine).